A 219-amino-acid chain; its full sequence is Octanoyltransferase (219 aa).

A BPL/LPL catalytic domain is found at 31 to 219; sequence EDLPGFLVFC…KLKRRLLEVL (189 aa). Residues 69–76, 153–155, and 166–168 contribute to the substrate site; these read RGGRATYH, SVG, and GAA. Residue C184 is the Acyl-thioester intermediate of the active site.

It belongs to the LipB family.

The protein localises to the cytoplasm. The catalysed reaction is octanoyl-[ACP] + L-lysyl-[protein] = N(6)-octanoyl-L-lysyl-[protein] + holo-[ACP] + H(+). The protein operates within protein modification; protein lipoylation via endogenous pathway; protein N(6)-(lipoyl)lysine from octanoyl-[acyl-carrier-protein]: step 1/2. Catalyzes the transfer of endogenously produced octanoic acid from octanoyl-acyl-carrier-protein onto the lipoyl domains of lipoate-dependent enzymes. Lipoyl-ACP can also act as a substrate although octanoyl-ACP is likely to be the physiological substrate. In Bdellovibrio bacteriovorus (strain ATCC 15356 / DSM 50701 / NCIMB 9529 / HD100), this protein is Octanoyltransferase.